Here is a 149-residue protein sequence, read N- to C-terminus: 3-hydroxyacyl-[acyl-carrier-protein] dehydratase FabZ (149 aa).

Residue H53 is part of the active site.

Belongs to the thioester dehydratase family. FabZ subfamily.

Its subcellular location is the cytoplasm. The catalysed reaction is a (3R)-hydroxyacyl-[ACP] = a (2E)-enoyl-[ACP] + H2O. Its function is as follows. Involved in unsaturated fatty acids biosynthesis. Catalyzes the dehydration of short chain beta-hydroxyacyl-ACPs and long chain saturated and unsaturated beta-hydroxyacyl-ACPs. The sequence is that of 3-hydroxyacyl-[acyl-carrier-protein] dehydratase FabZ from Polynucleobacter asymbioticus (strain DSM 18221 / CIP 109841 / QLW-P1DMWA-1) (Polynucleobacter necessarius subsp. asymbioticus).